The primary structure comprises 353 residues: Photosystem II protein D1 (353 aa).

Threonine 2 is modified (N-acetylthreonine). Position 2 is a phosphothreonine (threonine 2). Transmembrane regions (helical) follow at residues 29-46, 118-133, and 142-156; these read YIGW…TATS, HFLL…EWEL, and WIAV…AATA. Chlorophyll a is bound at residue histidine 118. Pheophytin a is bound at residue tyrosine 126. Positions 170 and 189 each coordinate [CaMn4O5] cluster. The chain crosses the membrane as a helical span at residues 197-218; the sequence is FHMLGVAGVFGGSLFSAMHGSL. Residue histidine 198 participates in chlorophyll a binding. A quinone contacts are provided by residues histidine 215 and 264–265; that span reads SF. Histidine 215 serves as a coordination point for Fe cation. Histidine 272 is a Fe cation binding site. Residues 274 to 288 form a helical membrane-spanning segment; that stretch reads FLAAWPVVGIWFTAL. The [CaMn4O5] cluster site is built by histidine 332, glutamate 333, aspartate 342, and alanine 344. Residues 345-353 constitute a propeptide that is removed on maturation; it reads AVEAPSING.

The protein belongs to the reaction center PufL/M/PsbA/D family. In terms of assembly, PSII is composed of 1 copy each of membrane proteins PsbA, PsbB, PsbC, PsbD, PsbE, PsbF, PsbH, PsbI, PsbJ, PsbK, PsbL, PsbM, PsbT, PsbX, PsbY, PsbZ, Psb30/Ycf12, at least 3 peripheral proteins of the oxygen-evolving complex and a large number of cofactors. It forms dimeric complexes. The cofactor is The D1/D2 heterodimer binds P680, chlorophylls that are the primary electron donor of PSII, and subsequent electron acceptors. It shares a non-heme iron and each subunit binds pheophytin, quinone, additional chlorophylls, carotenoids and lipids. D1 provides most of the ligands for the Mn4-Ca-O5 cluster of the oxygen-evolving complex (OEC). There is also a Cl(-1) ion associated with D1 and D2, which is required for oxygen evolution. The PSII complex binds additional chlorophylls, carotenoids and specific lipids.. In terms of processing, tyr-161 forms a radical intermediate that is referred to as redox-active TyrZ, YZ or Y-Z. C-terminally processed by CTPA; processing is essential to allow assembly of the oxygen-evolving complex and thus photosynthetic growth.

The protein localises to the plastid. It localises to the chloroplast thylakoid membrane. It catalyses the reaction 2 a plastoquinone + 4 hnu + 2 H2O = 2 a plastoquinol + O2. Its function is as follows. Photosystem II (PSII) is a light-driven water:plastoquinone oxidoreductase that uses light energy to abstract electrons from H(2)O, generating O(2) and a proton gradient subsequently used for ATP formation. It consists of a core antenna complex that captures photons, and an electron transfer chain that converts photonic excitation into a charge separation. The D1/D2 (PsbA/PsbD) reaction center heterodimer binds P680, the primary electron donor of PSII as well as several subsequent electron acceptors. This Illicium oligandrum (Star anise) protein is Photosystem II protein D1.